We begin with the raw amino-acid sequence, 116 residues long: Ribosome-binding factor A (116 aa).

This sequence belongs to the RbfA family. As to quaternary structure, monomer. Binds 30S ribosomal subunits, but not 50S ribosomal subunits or 70S ribosomes.

Its subcellular location is the cytoplasm. Functionally, one of several proteins that assist in the late maturation steps of the functional core of the 30S ribosomal subunit. Associates with free 30S ribosomal subunits (but not with 30S subunits that are part of 70S ribosomes or polysomes). Required for efficient processing of 16S rRNA. May interact with the 5'-terminal helix region of 16S rRNA. The protein is Ribosome-binding factor A of Streptococcus agalactiae.